Reading from the N-terminus, the 322-residue chain is Probable cAMP-dependent protein kinase catalytic subunit (322 aa).

Residues 7 to 261 (FEFVKVVGVG…ICEIMGHPFF (255 aa)) form the Protein kinase domain. ATP contacts are provided by residues 13-21 (VGVGAFGKV) and Lys37. Asp132 (proton acceptor) is an active-site residue. Positions 262-322 (KGIDWHEVES…KHLYKVSKGL (61 aa)) constitute an AGC-kinase C-terminal domain.

The protein belongs to the protein kinase superfamily. AGC Ser/Thr protein kinase family. cAMP subfamily.

The catalysed reaction is L-seryl-[protein] + ATP = O-phospho-L-seryl-[protein] + ADP + H(+). It catalyses the reaction L-threonyl-[protein] + ATP = O-phospho-L-threonyl-[protein] + ADP + H(+). The sequence is that of Probable cAMP-dependent protein kinase catalytic subunit from Encephalitozoon cuniculi (strain GB-M1) (Microsporidian parasite).